The chain runs to 237 residues: Phosphoribosylaminoimidazole-succinocarboxamide synthase (237 aa).

Belongs to the SAICAR synthetase family.

The enzyme catalyses 5-amino-1-(5-phospho-D-ribosyl)imidazole-4-carboxylate + L-aspartate + ATP = (2S)-2-[5-amino-1-(5-phospho-beta-D-ribosyl)imidazole-4-carboxamido]succinate + ADP + phosphate + 2 H(+). The protein operates within purine metabolism; IMP biosynthesis via de novo pathway; 5-amino-1-(5-phospho-D-ribosyl)imidazole-4-carboxamide from 5-amino-1-(5-phospho-D-ribosyl)imidazole-4-carboxylate: step 1/2. The chain is Phosphoribosylaminoimidazole-succinocarboxamide synthase from Yersinia pseudotuberculosis serotype O:1b (strain IP 31758).